The sequence spans 452 residues: La-related protein 1B (452 aa).

Residues 1–22 (MATTASSAANSASRFSIDSSIS) are compositionally biased toward low complexity. The disordered stretch occupies residues 1–251 (MATTASSAAN…GFSHRNYSGR (251 aa)). Alanine 2 is modified (N-acetylalanine). Over residues 44-68 (LSLSQDDPFSAPSVSPPTGNNSSDY) the composition is skewed to polar residues. 4 stretches are compositionally biased toward low complexity: residues 99–117 (SWPA…SPSL), 136–163 (ATSN…VNNS), 171–185 (NNNT…NVSN), and 206–223 (SGNF…SYPR). The segment covering 225-236 (EGLHHGNRRNYE) has biased composition (basic and acidic residues). Residues 237–247 (HGNQSGFSHRN) show a composition bias toward polar residues. The region spanning 328 to 417 (RNFDAILYNK…RGDWDKYLLP (90 aa)) is the HTH La-type RNA-binding domain. The disordered stretch occupies residues 419–452 (EPSRSGPAAGASNNASLVSQIESMTLSERSREGV). Low complexity predominate over residues 422 to 434 (RSGPAAGASNNAS). Over residues 435–445 (LVSQIESMTLS) the composition is skewed to polar residues.

Belongs to the LARP family.

It localises to the cytoplasm. Promotes leaf senescence. The protein is La-related protein 1B (LARP1B) of Arabidopsis thaliana (Mouse-ear cress).